The sequence spans 143 residues: Crossover junction endodeoxyribonuclease Hjc (143 aa).

E11 serves as a coordination point for Mg(2+). S31 is an active-site residue. 2 residues coordinate Mg(2+): D41 and E54.

The protein belongs to the Holliday junction resolvase Hjc family. Homodimer. The cofactor is Mg(2+).

The catalysed reaction is Endonucleolytic cleavage at a junction such as a reciprocal single-stranded crossover between two homologous DNA duplexes (Holliday junction).. In terms of biological role, a structure-specific endonuclease that resolves Holliday junction (HJ) intermediates during genetic recombination. Cleaves 4-way DNA junctions introducing paired nicks in opposing strands, leaving a 5'-terminal phosphate and a 3'-terminal hydroxyl group that are ligated to produce recombinant products. Functionally, redundant function with Holliday junction resolvase Hje. The sequence is that of Crossover junction endodeoxyribonuclease Hjc from Sulfolobus acidocaldarius (strain ATCC 33909 / DSM 639 / JCM 8929 / NBRC 15157 / NCIMB 11770).